The primary structure comprises 233 residues: Phosphoglycolate phosphatase 2 (233 aa).

Catalysis depends on Asp-13, which acts as the Nucleophile. Mg(2+) contacts are provided by Asp-13 and Asp-15. Lys-152 is a substrate binding site. Asp-174 and Asp-178 together coordinate Mg(2+).

Belongs to the archaeal SPP-like hydrolase family. Mg(2+) is required as a cofactor.

The catalysed reaction is 2-phosphoglycolate + H2O = glycolate + phosphate. In terms of biological role, catalyzes the dephosphorylation of 2-phosphoglycolate. The protein is Phosphoglycolate phosphatase 2 of Saccharolobus solfataricus (strain ATCC 35092 / DSM 1617 / JCM 11322 / P2) (Sulfolobus solfataricus).